The sequence spans 263 residues: 3-methyl-2-oxobutanoate hydroxymethyltransferase (263 aa).

Mg(2+) contacts are provided by aspartate 45 and aspartate 84. Residues 45 to 46 (DS), aspartate 84, and lysine 112 contribute to the 3-methyl-2-oxobutanoate site. Glutamate 114 contacts Mg(2+). The Proton acceptor role is filled by glutamate 180.

Belongs to the PanB family. Homodecamer; pentamer of dimers. Requires Mg(2+) as cofactor.

Its subcellular location is the cytoplasm. It catalyses the reaction 3-methyl-2-oxobutanoate + (6R)-5,10-methylene-5,6,7,8-tetrahydrofolate + H2O = 2-dehydropantoate + (6S)-5,6,7,8-tetrahydrofolate. It participates in cofactor biosynthesis; (R)-pantothenate biosynthesis; (R)-pantoate from 3-methyl-2-oxobutanoate: step 1/2. Its function is as follows. Catalyzes the reversible reaction in which hydroxymethyl group from 5,10-methylenetetrahydrofolate is transferred onto alpha-ketoisovalerate to form ketopantoate. The sequence is that of 3-methyl-2-oxobutanoate hydroxymethyltransferase from Salmonella agona (strain SL483).